Here is a 1215-residue protein sequence, read N- to C-terminus: MPGGVNAVYMGLCYNCGGNIDEDRLEKGLPCARCLPSPPRRATPLTVYRALKKAGTLGAYSWEYLSIREVERFEAYFAAKSGSRLWSAQRSWAKRLVKGDSFAIIAPTGVGKSTLLTVYAAYVAAVKRGRVLYLVPTENLVRQVYAKLDQVEPGIATAYYSRMPAKARESSLEKIASGGARLIVATTGFLSRRFDLLHPQYKFDLAIVDDVDSLLRNSRNVERILLLTGFSEETVEAAHSLVKARLKLYRALHSGASESIVSRLEQEIAQLEARLRLSLSEASPGQLVIASATGRPRGVKHLLFKELLGFEVGGGSDYLRNIVDAYVVDSDPVGRTAEIVSALGDGVIVFVSQRLGKDVARAIAGRLEGMGVSTALALTGARRPVEAFARGEARVLIGMASRYGVIVRGLDLPERSKYAVFLGAPSAKTHLLEALYSPRRMLAFLSIAQEKGVEWAGEAFRRLSRLLEKVIDTSIVSLAARGKLEAQGPAGEAAGIISETAPRLVDWLVAEARLQGGLLRVGGLVVDARGPIPYLVVPDAPTYIQASGRVSRLYRGVMTRGLSIVVDEAPEYVEALGERLKWTTSSRLRPLSEVDMEKLRREIEESRRGKGRRVRVKTTLLVVESPTKARTIAWFWGRPGKRRIGRSVIYEASVSDPETGDVHILQITSTRGHLTDLTTDSVGSKYGVDEDGGGYRAYYSTIKRCLDCGAQHTSSSPFCPRCGSPRQVDSKSVVEILRKLASEVDEIVIATDPDREGEKIAWDVFLAVRPYNPNVRRGRFHEVTPRAVIEALRSGESVEKSLIEAQKVRRIVDRWIGFHLSTHLKLKFSKPWLGAGRVQTPVLGWIVDRYREWQDTRGYLVIFKLSSGGRTSYFTQNRLEVENLKRVEWLEVVDIAGKTEERNPPPPYTTDEYLYDASRKLGLSAGLAMKIAQDLFESGLITYHRTDSTRVSPTGVKLALEYLASRGLEGEAQPRGWGEGGAHEAIRPVRPIDAQDLERAVLSGSIRIPIRLTRLHIRVYDMIFRRFIASQMKPATLDIVEATLQAGETVFNHAGVARVRGGYALVNPPRVEEWLARLSPGDRIDVEDVLVVKSSLKRLYRAGDIVKMMREHGIGRPSTYAKAIEQNRRHGYVIESKKMRYLIPTKTGVSIYDYLSNGFKKLVSVDTTRRLEEALERVEKGVEKPEAVLASVWRMVDEAVSLHAATGDVMGQSEA.

The RG N-terminal-type zinc finger occupies 3–44 (GGVNAVYMGLCYNCGGNIDEDRLEKGLPCARCLPSPPRRATP). Positions 13, 16, 31, and 34 each coordinate Zn(2+). Residues Gln-89 and 106–113 (APTGVGKS) contribute to the ATP site. In terms of domain architecture, Helicase ATP-binding spans 93-249 (AKRLVKGDSF…SLVKARLKLY (157 aa)). Positions 209 to 212 (DDVD) match the DEAD box motif. The interval 614–1215 (VRVKTTLLVV…TGDVMGQSEA (602 aa)) is topoisomerase I. Positions 618–783 (TTLLVVESPT…NVRRGRFHEV (166 aa)) constitute a Toprim domain. Glu-624 is a Mg(2+) binding site. The RG C-terminal-type zinc finger occupies 702–729 (IKRCLDCGAQHTSSSPFCPRCGSPRQVD). Zn(2+) contacts are provided by Cys-705, Cys-708, Cys-719, and Cys-722. Mg(2+) is bound at residue Asp-752. A Topo IA-type catalytic domain is found at 799-1200 (EKSLIEAQKV…SVWRMVDEAV (402 aa)). Tyr-943 (O-(5'-phospho-DNA)-tyrosine intermediate) is an active-site residue.

It in the N-terminal section; belongs to the DEAD box helicase family. DDVD subfamily. The protein in the C-terminal section; belongs to the type IA topoisomerase family. As to quaternary structure, monomer. Zn(2+) serves as cofactor. Mg(2+) is required as a cofactor.

It is found in the cytoplasm. It carries out the reaction ATP + H2O = ADP + phosphate + H(+). Its function is as follows. Modifies the topological state of DNA by introducing positive supercoils in an ATP-dependent process, increasing the linking number in steps of +1. Binds to single-stranded DNA, transiently cleaves and then rejoins the ends, introducing a positive supercoil in the process. The scissile phosphodiester is attacked by the catalytic tyrosine of the enzyme, resulting in the formation of a DNA-(5'-phosphotyrosyl)-enzyme intermediate. Probably involved in rewinding DNA strands in regions of the chromosome that have opened up to allow replication, transcription, DNA repair and/or for DNA protection. The chain is Reverse gyrase 2 from Aeropyrum pernix (strain ATCC 700893 / DSM 11879 / JCM 9820 / NBRC 100138 / K1).